The following is a 1080-amino-acid chain: Serine/threonine-protein kinase KIC1 (1080 aa).

The Protein kinase domain maps to 23 to 276 (FKRTEVIGRG…ADDLLKSKFI (254 aa)). ATP contacts are provided by residues 29–37 (IGRGKFGVV) and Lys-52. Catalysis depends on Asp-144, which acts as the Proton acceptor. Disordered regions lie at residues 308–347 (EGSI…EIKR), 615–760 (KARS…LAPP), 787–831 (STLN…LQMP), and 901–956 (SQSI…NTGN). Residues 312–326 (PENEPSKPSEAPKPS) are compositionally biased toward low complexity. The span at 615–626 (KARSSTVTAGTP) shows a compositional bias: polar residues. Positions 627–638 (SSSSSIQYKSPS) are enriched in low complexity. Residues 656 to 673 (STITNQKLGSAVASNSGI) are compositionally biased toward polar residues. Residues 674-689 (SSTPNNSNNYNNNTDS) show a composition bias toward low complexity. Residues 693-726 (RGSSGSNTANSTQMGITNPGNVTKLSTHKASSPS) are compositionally biased toward polar residues. Ser-735 is subject to Phosphoserine. Over residues 743-756 (SPTQNIGHNSTHTN) the composition is skewed to polar residues. Residues 787–807 (STLNTISGNSSNNLTSSNYFS) show a composition bias toward low complexity. The span at 808–821 (NEKEGSRVNGDFKR) shows a compositional bias: basic and acidic residues. Residues 901–913 (SQSISNRKNSSAS) show a composition bias toward polar residues. Residues 918–956 (NILGSSVSGNVSGIGNNNVGSNNNSGPNNSVPLSANTGN) are compositionally biased toward low complexity.

Belongs to the protein kinase superfamily. Ser/Thr protein kinase family. As to quaternary structure, interacts with CDC31.

The catalysed reaction is L-seryl-[protein] + ATP = O-phospho-L-seryl-[protein] + ADP + H(+). The enzyme catalyses L-threonyl-[protein] + ATP = O-phospho-L-threonyl-[protein] + ADP + H(+). Functionally, protein kinase involved in morphogenesis and cell integrity. The polypeptide is Serine/threonine-protein kinase KIC1 (KIC1) (Saccharomyces cerevisiae (strain ATCC 204508 / S288c) (Baker's yeast)).